We begin with the raw amino-acid sequence, 261 residues long: Acyl-[acyl-carrier-protein]--UDP-N-acetylglucosamine O-acyltransferase (261 aa).

The protein belongs to the transferase hexapeptide repeat family. LpxA subfamily. As to quaternary structure, homotrimer.

The protein resides in the cytoplasm. It carries out the reaction a (3R)-hydroxyacyl-[ACP] + UDP-N-acetyl-alpha-D-glucosamine = a UDP-3-O-[(3R)-3-hydroxyacyl]-N-acetyl-alpha-D-glucosamine + holo-[ACP]. Its pathway is glycolipid biosynthesis; lipid IV(A) biosynthesis; lipid IV(A) from (3R)-3-hydroxytetradecanoyl-[acyl-carrier-protein] and UDP-N-acetyl-alpha-D-glucosamine: step 1/6. In terms of biological role, involved in the biosynthesis of lipid A, a phosphorylated glycolipid that anchors the lipopolysaccharide to the outer membrane of the cell. The sequence is that of Acyl-[acyl-carrier-protein]--UDP-N-acetylglucosamine O-acyltransferase from Sulfurimonas denitrificans (strain ATCC 33889 / DSM 1251) (Thiomicrospira denitrificans (strain ATCC 33889 / DSM 1251)).